The chain runs to 165 residues: Endoribonuclease YbeY (165 aa).

Zn(2+)-binding residues include His-130, His-134, and His-140.

It belongs to the endoribonuclease YbeY family. It depends on Zn(2+) as a cofactor.

Its subcellular location is the cytoplasm. Single strand-specific metallo-endoribonuclease involved in late-stage 70S ribosome quality control and in maturation of the 3' terminus of the 16S rRNA. The polypeptide is Endoribonuclease YbeY (Streptococcus thermophilus (strain CNRZ 1066)).